Here is a 466-residue protein sequence, read N- to C-terminus: Soluble pyridine nucleotide transhydrogenase (466 aa).

Residue 36–45 (EKESSVGGGC) coordinates FAD.

The protein belongs to the class-I pyridine nucleotide-disulfide oxidoreductase family. Requires FAD as cofactor.

It is found in the cytoplasm. It catalyses the reaction NAD(+) + NADPH = NADH + NADP(+). Functionally, conversion of NADPH, generated by peripheral catabolic pathways, to NADH, which can enter the respiratory chain for energy generation. The protein is Soluble pyridine nucleotide transhydrogenase of Vibrio parahaemolyticus serotype O3:K6 (strain RIMD 2210633).